A 1030-amino-acid chain; its full sequence is MMS19 nucleotide excision repair protein homolog (1030 aa).

A2 is subject to N-acetylalanine. HEAT repeat units lie at residues 866–904 (QRFF…RLPK), 908–946 (LPEL…EAPQ), 949–987 (SLHV…LPTP), and 990–1028 (LPYK…LGSP). Phosphoserine is present on S1027.

Belongs to the MET18/MMS19 family. Component of the CIA complex. In the CIA complex, interacts directly with CIAO2B and CIAO3. Component of the MMXD complex, composed of CIAO1, ERCC2, CIAO2B, MMS19 and SLC25A5. Interacts with CIAO2B; the interaction is direct. Interacts with ERCC2/XPD; the interaction is direct. Interacts with ERCC3/XPB and NCOA3/RAC3. Interacts with RTEL1; the interaction mediates the association of RTEL1 with the CIA complex. Interacts with BRIP1. Interacts with KIF4A; the interaction facilitates the transfer of Fe-S clusters to KIF4A to ensure proper localization of KIF4A to the mitotic machinery components. Interacts with CCDC117; the interaction is indirect. In terms of processing, ubiquitinated; undergoes 'Lys-48'-linked polyubiquitination.

It is found in the nucleus. The protein localises to the cytoplasm. Its subcellular location is the cytoskeleton. It localises to the spindle. Key component of the cytosolic iron-sulfur protein assembly (CIA) complex, a multiprotein complex that mediates the incorporation of iron-sulfur cluster into apoproteins specifically involved in DNA metabolism and genomic integrity. In the CIA complex, MMS19 acts as an adapter between early-acting CIA components and a subset of cellular target Fe/S proteins such as ERCC2/XPD, FANCJ and RTEL1, thereby playing a key role in nucleotide excision repair (NER), homologous recombination-mediated double-strand break DNA repair, DNA replication and RNA polymerase II (POL II) transcription. As a CIA complex component and in collaboration with CIAO1 and CIAO2, binds to and facilitates the assembly of most cytosolic-nuclear Fe/S proteins. As part of the mitotic spindle-associated MMXD complex, plays a role in chromosome segregation, probably by facilitating iron-sulfur cluster assembly into ERCC2/XPD. Together with CIAO2, facilitates the transfer of Fe-S clusters to the motor protein KIF4A, which ensures proper localization of KIF4A to mitotic machinery components to promote the progression of mitosis. Indirectly acts as a transcriptional coactivator of estrogen receptor (ER), via its role in iron-sulfur insertion into some component of the TFIIH-machinery. The protein is MMS19 nucleotide excision repair protein homolog of Bos taurus (Bovine).